A 156-amino-acid polypeptide reads, in one-letter code: Endoribonuclease YbeY (156 aa).

H122, H126, and H132 together coordinate Zn(2+).

It belongs to the endoribonuclease YbeY family. Zn(2+) is required as a cofactor.

The protein localises to the cytoplasm. Its function is as follows. Single strand-specific metallo-endoribonuclease involved in late-stage 70S ribosome quality control and in maturation of the 3' terminus of the 16S rRNA. The protein is Endoribonuclease YbeY of Bacillus mycoides (strain KBAB4) (Bacillus weihenstephanensis).